The chain runs to 228 residues: Urease subunit gamma/beta (228 aa).

The tract at residues M1–G101 is urease gamma. The tract at residues A102–Q228 is urease beta.

The protein in the N-terminal section; belongs to the urease gamma subunit family. In the C-terminal section; belongs to the urease beta subunit family. Heterohexamer of 3 UreC (alpha) and 3 UreAB (gamma/beta) subunits.

Its subcellular location is the cytoplasm. It catalyses the reaction urea + 2 H2O + H(+) = hydrogencarbonate + 2 NH4(+). The protein operates within nitrogen metabolism; urea degradation; CO(2) and NH(3) from urea (urease route): step 1/1. This Deinococcus radiodurans (strain ATCC 13939 / DSM 20539 / JCM 16871 / CCUG 27074 / LMG 4051 / NBRC 15346 / NCIMB 9279 / VKM B-1422 / R1) protein is Urease subunit gamma/beta.